The chain runs to 624 residues: Glutamine--fructose-6-phosphate aminotransferase [isomerizing] (624 aa).

Residue Cys2 is the Nucleophile; for GATase activity of the active site. In terms of domain architecture, Glutamine amidotransferase type-2 spans 2 to 225 (CGIVGYVGRR…QDQAVVITAD (224 aa)). SIS domains lie at 297–436 (SDQE…ARGT) and 469–614 (LAHR…VDKP). Lys619 functions as the For Fru-6P isomerization activity in the catalytic mechanism.

As to quaternary structure, homodimer.

Its subcellular location is the cytoplasm. It catalyses the reaction D-fructose 6-phosphate + L-glutamine = D-glucosamine 6-phosphate + L-glutamate. Functionally, catalyzes the first step in hexosamine metabolism, converting fructose-6P into glucosamine-6P using glutamine as a nitrogen source. The protein is Glutamine--fructose-6-phosphate aminotransferase [isomerizing] of Mycobacterium bovis (strain ATCC BAA-935 / AF2122/97).